A 344-amino-acid chain; its full sequence is Putative replication factor C small subunit L499 (344 aa).

Position 57 to 64 (57 to 64 (GPSGSGKT)) interacts with ATP.

It belongs to the activator 1 small subunits family. RfcS subfamily.

In terms of biological role, part of the RFC clamp loader complex which loads the PCNA sliding clamp onto DNA. The polypeptide is Putative replication factor C small subunit L499 (Acanthamoeba polyphaga mimivirus (APMV)).